Reading from the N-terminus, the 775-residue chain is 1,4-alpha-glucan branching enzyme GlgB (775 aa).

The disordered stretch occupies residues 1–39; the sequence is MTSVHDFATATRPATPSAAAQEPAPALPPGLDRNTLDAL. The span at 8–24 shows a compositional bias: low complexity; the sequence is ATATRPATPSAAAQEPA. Asp454 (nucleophile) is an active-site residue. Residue Glu507 is the Proton donor of the active site.

The protein belongs to the glycosyl hydrolase 13 family. GlgB subfamily. In terms of assembly, monomer.

It carries out the reaction Transfers a segment of a (1-&gt;4)-alpha-D-glucan chain to a primary hydroxy group in a similar glucan chain.. The protein operates within glycan biosynthesis; glycogen biosynthesis. Catalyzes the formation of the alpha-1,6-glucosidic linkages in glycogen by scission of a 1,4-alpha-linked oligosaccharide from growing alpha-1,4-glucan chains and the subsequent attachment of the oligosaccharide to the alpha-1,6 position. This is 1,4-alpha-glucan branching enzyme GlgB from Ralstonia nicotianae (strain ATCC BAA-1114 / GMI1000) (Ralstonia solanacearum).